The primary structure comprises 270 residues: Putative phosphoenolpyruvate synthase regulatory protein (270 aa).

Position 150 to 157 (150 to 157 (GVSRCGKT)) interacts with ADP.

This sequence belongs to the pyruvate, phosphate/water dikinase regulatory protein family. PSRP subfamily.

It carries out the reaction [pyruvate, water dikinase] + ADP = [pyruvate, water dikinase]-phosphate + AMP + H(+). The enzyme catalyses [pyruvate, water dikinase]-phosphate + phosphate + H(+) = [pyruvate, water dikinase] + diphosphate. Its function is as follows. Bifunctional serine/threonine kinase and phosphorylase involved in the regulation of the phosphoenolpyruvate synthase (PEPS) by catalyzing its phosphorylation/dephosphorylation. The polypeptide is Putative phosphoenolpyruvate synthase regulatory protein (Shewanella denitrificans (strain OS217 / ATCC BAA-1090 / DSM 15013)).